Here is a 393-residue protein sequence, read N- to C-terminus: 8-amino-7-oxononanoate synthase (393 aa).

107–108 contributes to the pyridoxal 5'-phosphate binding site; sequence GF. A substrate-binding site is contributed by His-132. Pyridoxal 5'-phosphate-binding positions include Ser-180, 205-208, and 236-239; these read DDAH and TLSK. An N6-(pyridoxal phosphate)lysine modification is found at Lys-239. Thr-353 provides a ligand contact to substrate.

The protein belongs to the class-II pyridoxal-phosphate-dependent aminotransferase family. BioF subfamily. As to quaternary structure, homodimer. It depends on pyridoxal 5'-phosphate as a cofactor.

The catalysed reaction is 6-carboxyhexanoyl-[ACP] + L-alanine + H(+) = (8S)-8-amino-7-oxononanoate + holo-[ACP] + CO2. The protein operates within cofactor biosynthesis; biotin biosynthesis. Functionally, catalyzes the decarboxylative condensation of pimeloyl-[acyl-carrier protein] and L-alanine to produce 8-amino-7-oxononanoate (AON), [acyl-carrier protein], and carbon dioxide. In Coprothermobacter proteolyticus (strain ATCC 35245 / DSM 5265 / OCM 4 / BT), this protein is 8-amino-7-oxononanoate synthase.